We begin with the raw amino-acid sequence, 593 residues long: Glutamate decarboxylase 1 (593 aa).

Residues 1–12 show a composition bias toward low complexity; the sequence is MASSTPSPATSS. Positions 1–22 are disordered; that stretch reads MASSTPSPATSSNAGADPNTTN. Ser77 carries the phosphoserine modification. Position 189–191 (189–191) interacts with 4-aminobutanoate; sequence QLS. An N6-(pyridoxal phosphate)lysine modification is found at Lys404. Position 566 (Arg566) interacts with 4-aminobutanoate.

It belongs to the group II decarboxylase family. As to quaternary structure, homodimer. Pyridoxal 5'-phosphate serves as cofactor.

The enzyme catalyses L-glutamate + H(+) = 4-aminobutanoate + CO2. Functionally, catalyzes the synthesis of the inhibitory neurotransmitter gamma-aminobutyric acid (GABA) with pyridoxal 5'-phosphate as cofactor. The polypeptide is Glutamate decarboxylase 1 (Gad1) (Mus musculus (Mouse)).